The following is a 306-amino-acid chain: Recombination-associated protein RdgC (306 aa).

The protein belongs to the RdgC family.

It is found in the cytoplasm. It localises to the nucleoid. Its function is as follows. May be involved in recombination. This Pseudomonas fluorescens (strain SBW25) protein is Recombination-associated protein RdgC.